The primary structure comprises 207 residues: CASP-like protein F16 (207 aa).

Positions Met1–Glu30 are disordered. Over Met1–Thr37 the chain is Cytoplasmic. A helical transmembrane segment spans residues Ala38 to Leu58. The Extracellular segment spans residues Lys59–Tyr79. A helical membrane pass occupies residues Leu80–Val100. The Cytoplasmic segment spans residues Pro101–Arg108. A helical transmembrane segment spans residues Ala109–Val129. The Extracellular segment spans residues Ser130 to Lys159. A helical transmembrane segment spans residues Ala160–Val180. Over Ser181–Gly207 the chain is Cytoplasmic.

This sequence belongs to the Casparian strip membrane proteins (CASP) family. As to quaternary structure, homodimer and heterodimers.

Its subcellular location is the cell membrane. This Gossypium hirsutum (Upland cotton) protein is CASP-like protein F16 (F16).